The chain runs to 231 residues: 5'-methylthioadenosine/S-adenosylhomocysteine nucleosidase (231 aa).

The active-site Proton acceptor is Glu12. Residues Gly78, Met153, and 174-175 contribute to the substrate site; that span reads ME. The active-site Proton donor is the Asp198.

It belongs to the PNP/UDP phosphorylase family. MtnN subfamily.

It catalyses the reaction S-adenosyl-L-homocysteine + H2O = S-(5-deoxy-D-ribos-5-yl)-L-homocysteine + adenine. The catalysed reaction is S-methyl-5'-thioadenosine + H2O = 5-(methylsulfanyl)-D-ribose + adenine. The enzyme catalyses 5'-deoxyadenosine + H2O = 5-deoxy-D-ribose + adenine. Its pathway is amino-acid biosynthesis; L-methionine biosynthesis via salvage pathway; S-methyl-5-thio-alpha-D-ribose 1-phosphate from S-methyl-5'-thioadenosine (hydrolase route): step 1/2. Its function is as follows. Catalyzes the irreversible cleavage of the glycosidic bond in both 5'-methylthioadenosine (MTA) and S-adenosylhomocysteine (SAH/AdoHcy) to adenine and the corresponding thioribose, 5'-methylthioribose and S-ribosylhomocysteine, respectively. Also cleaves 5'-deoxyadenosine, a toxic by-product of radical S-adenosylmethionine (SAM) enzymes, into 5-deoxyribose and adenine. This chain is 5'-methylthioadenosine/S-adenosylhomocysteine nucleosidase, found in Psychromonas ingrahamii (strain DSM 17664 / CCUG 51855 / 37).